The following is a 94-amino-acid chain: Small ribosomal subunit protein uS19 (94 aa).

Belongs to the universal ribosomal protein uS19 family.

Protein S19 forms a complex with S13 that binds strongly to the 16S ribosomal RNA. In Carboxydothermus hydrogenoformans (strain ATCC BAA-161 / DSM 6008 / Z-2901), this protein is Small ribosomal subunit protein uS19.